The sequence spans 206 residues: FMN-dependent NADH:quinone oxidoreductase (206 aa).

Residues Ser-10, 16 to 18, 93 to 96, and 137 to 140 each bind FMN; these read SSS, MYNF, and TRGG.

This sequence belongs to the azoreductase type 1 family. As to quaternary structure, homodimer. The cofactor is FMN.

It catalyses the reaction 2 a quinone + NADH + H(+) = 2 a 1,4-benzosemiquinone + NAD(+). The enzyme catalyses N,N-dimethyl-1,4-phenylenediamine + anthranilate + 2 NAD(+) = 2-(4-dimethylaminophenyl)diazenylbenzoate + 2 NADH + 2 H(+). Its function is as follows. Quinone reductase that provides resistance to thiol-specific stress caused by electrophilic quinones. In terms of biological role, also exhibits azoreductase activity. Catalyzes the reductive cleavage of the azo bond in aromatic azo compounds to the corresponding amines. The protein is FMN-dependent NADH:quinone oxidoreductase of Psychromonas ingrahamii (strain DSM 17664 / CCUG 51855 / 37).